A 48-amino-acid chain; its full sequence is Delta-actitoxin-Bcg1b (48 aa).

3 disulfide bridges follow: Cys-4–Cys-45, Cys-6–Cys-35, and Cys-28–Cys-46.

It belongs to the sea anemone sodium channel inhibitory toxin family. Type I subfamily.

The protein localises to the secreted. It localises to the nematocyst. Binds to the sodium channels Nav1.1/SCN1A (EC(50)=165 nM), Nav1.5/SCN5A (EC(50)=103 nM) and Nav1.6/SCN8A (EC(50)=133 nM), thereby delaying their inactivation. Also inhibits Nav1.2/SCN2A, Nav1.3/SCN3A, and Nav1.4/SCN4A, but to a lesser extent. Inhibits Nav1.5 differently from isoforms Nav1.1 and Nav1.6. In Nav1.5 the effect consists in a right-shift of inactivation; whereas in both Nav1.1 and Nav1.6 the effect consists in an incomplete inactivation. The polypeptide is Delta-actitoxin-Bcg1b (Bunodosoma cangicum (Sea anemone)).